The primary structure comprises 4699 residues: PKS-NRPS hybrid synthetase cheA (4699 aa).

Residues 1 to 21 (MSDNDDEWNGFSDDNGEDDGP) are compositionally biased toward acidic residues. 2 disordered regions span residues 1 to 38 (MSDN…WDVP) and 136 to 165 (DGWR…HTQH). The segment covering 136–148 (DGWRFHSHPDPQH) has biased composition (basic and acidic residues). The interval 172 to 520 (SLDTIAELSN…VQQNVEEMAK (349 aa)) is N-terminal acylcarrier protein transacylase domain (SAT). The disordered stretch occupies residues 625–836 (PLPSVEDNVA…AGAPGARVTR (212 aa)). Residues 674–688 (TQGSQGSQGRRTPGS) show a composition bias toward low complexity. The segment covering 724 to 737 (PKRRGRPPGSKNKK) has biased composition (basic residues). The Ketosynthase family 3 (KS3) domain occupies 737–1138 (KKDQAPAPAE…GANAHAILEA (402 aa)). The span at 764-777 (ASAPRRGLRAAPAA) shows a compositional bias: low complexity. The span at 802–816 (ATASTPRAQSDQGTG) shows a compositional bias: polar residues. Active-site for beta-ketoacyl synthase activity residues include cysteine 873, histidine 1012, and histidine 1058. The tract at residues 1250–1573 (VFTGQGAQWP…VGTLLRQRDA (324 aa)) is malonyl-CoA:ACP transacylase (MAT) domain. An N-terminal hotdog fold region spans residues 1644–1777 (NELLGTRIMD…ANLIISLGEP (134 aa)). Residues 1644–1947 (NELLGTRIMD…TKPLVPPTPS (304 aa)) enclose the PKS/mFAS DH domain. The interval 1645–1941 (ELLGTRIMDN…QLQGLHTKPL (297 aa)) is dehydratase (DH) domain. The active-site Proton acceptor; for dehydratase activity is the histidine 1676. Residues 1794–1947 (MLDVPAERFY…TKPLVPPTPS (154 aa)) form a C-terminal hotdog fold region. The active-site Proton donor; for dehydratase activity is the aspartate 1854. The segment at 2050-2241 (LNRFYIEALG…RNTGFSGADE (192 aa)) is methyltransferase (MT) domain. The segment at 2794-2967 (TYWLVGLTGG…PAAAVNIGAV (174 aa)) is ketoreductase (KR) domain. The 78-residue stretch at 3076 to 3153 (DASEILEDAY…ALFELVKERA (78 aa)) folds into the Carrier 1 domain. At serine 3113 the chain carries O-(pantetheine 4'-phosphoryl)serine. The segment at 3164–3265 (EQPDQVKSPR…PVASSPDAGL (102 aa)) is disordered. Polar residues-rich tracts occupy residues 3200–3209 (SLDQGSSWDS) and 3218–3233 (GHDS…SSPI). The condensation (C) domain stretch occupies residues 3268 to 3696 (SVPLSFSQAR…PISRISKPPL (429 aa)). An adenylation (A) domain region spans residues 3730-4113 (IQAHPDKLAL…GGLILEGRID (384 aa)). Positions 4236–4316 (EGLPAMQHLI…TMAALVASGS (81 aa)) constitute a Carrier 2 domain. The thiolation and peptide carrier (T) domain stretch occupies residues 4241 to 4313 (MQHLIKQLWE…TLETMAALVA (73 aa)). The residue at position 4276 (serine 4276) is an O-(pantetheine 4'-phosphoryl)serine. Residues 4367-4598 (LTGSTGFLGR…ISVHTVAAAI (232 aa)) are reductase (R) domain.

This sequence in the C-terminal section; belongs to the NRP synthetase family.

It participates in secondary metabolite biosynthesis. In terms of biological role, PKS-NRPS hybrid synthetase; part of the gene cluster that mediates the biosynthesis of chaetoglobosin A which has a unique inhibitory activity against actin polymerization in mammalian cells. Chaetoglobosin A and its intermediates are involved in the morphological differentiation of C.globosum. The first step of the pathway is the synthesis of prochaetoglobosin I via condensation of one acetyl-CoA, 8 malonyl-CoA, and a L-tryptophan molecule by the PKS-NRPS hybrid synthetase cheA, followed by reduction of backbone double bond to install desired geometry by the enoyl reductase cheB. Further multiple oxidation steps performed by the cytochrome P450 monooxygenases cheE and cheG, as well as by the FAD-linked oxidoreductase cheF, lead to the formation of chaetoglobosin A. Depending on the order of action of these reductases, distinct intermediates can be identified. Within the pathway, the cytochrome P450 monooxygenase cheE catalyzes a stereospecific epoxidation on prochaetoglobosin I, cytoglobosin D, and chaetoglobosin J intermediates. The FAD-linked oxidoreductase cheF performs dehydrogenation of the C-20 hydroxyl groups in the 20-dihyrochaetoglobosin A and cytoglobosin D intermediates. Finally, the cytochrome P450 monooxygenase cheG can catalyze the stereospecific dihydroxylation of prochaetoglobosin I and prochaetoglobosin IV at C-19 and C-20, respectively. The Diels-Alderase cheD may play a role in the post-PKS-NRPS biosynthetic steps catalyzing Diels-Alder cyclization. This chain is PKS-NRPS hybrid synthetase cheA, found in Chaetomium globosum (strain ATCC 6205 / CBS 148.51 / DSM 1962 / NBRC 6347 / NRRL 1970) (Soil fungus).